A 219-amino-acid chain; its full sequence is 2-hydroxy-3-keto-5-methylthiopentenyl-1-phosphate phosphatase (219 aa).

Belongs to the HAD-like hydrolase superfamily. MtnX family.

The catalysed reaction is 2-hydroxy-5-methylsulfanyl-3-oxopent-1-enyl phosphate + H2O = 1,2-dihydroxy-5-(methylsulfanyl)pent-1-en-3-one + phosphate. It functions in the pathway amino-acid biosynthesis; L-methionine biosynthesis via salvage pathway; L-methionine from S-methyl-5-thio-alpha-D-ribose 1-phosphate: step 4/6. Dephosphorylates 2-hydroxy-3-keto-5-methylthiopentenyl-1-phosphate (HK-MTPenyl-1-P) yielding 1,2-dihydroxy-3-keto-5-methylthiopentene (DHK-MTPene). This chain is 2-hydroxy-3-keto-5-methylthiopentenyl-1-phosphate phosphatase, found in Bacillus cereus (strain ZK / E33L).